A 172-amino-acid chain; its full sequence is AIG2-like protein C (172 aa).

13–18 (YGSLQE) is a substrate binding site. The active-site Proton acceptor is Glu-81.

Belongs to the gamma-glutamylcyclotransferase family. In terms of tissue distribution, expressed in flowers, leaves, stems and roots.

Functionally, putative gamma-glutamylcyclotransferase. The polypeptide is AIG2-like protein C (Arabidopsis thaliana (Mouse-ear cress)).